We begin with the raw amino-acid sequence, 159 residues long: SsrA-binding protein (159 aa).

The segment at 134 to 159 (KLHDKRETSKERDWNRQKNRLLKERG) is disordered. Positions 137–159 (DKRETSKERDWNRQKNRLLKERG) are enriched in basic and acidic residues.

Belongs to the SmpB family.

Its subcellular location is the cytoplasm. Functionally, required for rescue of stalled ribosomes mediated by trans-translation. Binds to transfer-messenger RNA (tmRNA), required for stable association of tmRNA with ribosomes. tmRNA and SmpB together mimic tRNA shape, replacing the anticodon stem-loop with SmpB. tmRNA is encoded by the ssrA gene; the 2 termini fold to resemble tRNA(Ala) and it encodes a 'tag peptide', a short internal open reading frame. During trans-translation Ala-aminoacylated tmRNA acts like a tRNA, entering the A-site of stalled ribosomes, displacing the stalled mRNA. The ribosome then switches to translate the ORF on the tmRNA; the nascent peptide is terminated with the 'tag peptide' encoded by the tmRNA and targeted for degradation. The ribosome is freed to recommence translation, which seems to be the essential function of trans-translation. The protein is SsrA-binding protein of Sinorhizobium fredii (strain NBRC 101917 / NGR234).